We begin with the raw amino-acid sequence, 298 residues long: Biphenyl-2,3-diol 1,2-dioxygenase (298 aa).

2 VOC domains span residues 5–119 (SLGY…IYYG) and 143–264 (GLGH…YGWS). Fe cation is bound by residues H146, H210, and E260.

This sequence belongs to the extradiol ring-cleavage dioxygenase family. In terms of assembly, homooctamer. The enzyme is composed of two planar tetramers rotated at 45 degrees relative to each other, with a channel in the middle. Fe(2+) is required as a cofactor.

It catalyses the reaction biphenyl-2,3-diol + O2 = 2-hydroxy-6-oxo-6-phenylhexa-2,4-dienoate + H(+). It participates in xenobiotic degradation; biphenyl degradation; 2-hydroxy-2,4-pentadienoate and benzoate from biphenyl: step 3/4. In terms of biological role, shows a preference for catechols with groups immediately adjacent to the hydroxyl substituents. The chain is Biphenyl-2,3-diol 1,2-dioxygenase (bphC) from Paraburkholderia xenovorans (strain LB400).